The sequence spans 411 residues: Translation initiation factor 2 subunit gamma (411 aa).

A tr-type G domain is found at 9-203 (QAEVNIGMVG…AIEEFIPTPK (195 aa)). The interval 18–25 (GHVDHGKT) is G1. Mg(2+) contacts are provided by Asp-21, Thr-25, Gly-46, and Thr-48. Residue 21-26 (DHGKTT) participates in GTP binding. Residues 46 to 50 (GITIK) form a G2 region. Residues Cys-61, Cys-64, Cys-73, and Cys-76 each coordinate Zn(2+). Positions 90-93 (DSPG) are G3. GTP is bound by residues 146–149 (NKIE) and 181–183 (SAL). The tract at residues 146 to 149 (NKIE) is G4. Residues 181–183 (SAL) form a G5 region.

Belongs to the TRAFAC class translation factor GTPase superfamily. Classic translation factor GTPase family. EIF2G subfamily. In terms of assembly, heterotrimer composed of an alpha, a beta and a gamma chain. Mg(2+) serves as cofactor.

It catalyses the reaction GTP + H2O = GDP + phosphate + H(+). EIF-2 functions in the early steps of protein synthesis by forming a ternary complex with GTP and initiator tRNA. This is Translation initiation factor 2 subunit gamma from Pyrococcus furiosus (strain ATCC 43587 / DSM 3638 / JCM 8422 / Vc1).